A 535-amino-acid chain; its full sequence is Triacylglyceride transporter MHAS_02168/C731_2106 (535 aa).

Residues 1-18 lie on the Cytoplasmic side of the membrane; sequence MAFPQTPNRLIRPRRTSR. The helical transmembrane segment at 19–39 threads the bilayer; it reads GIAISAGGLAVLLGALDTYVV. The Periplasmic segment spans residues 40 to 60; the sequence is VSIVTDIMRDVGIAVNQIQRV. Residues 61–82 traverse the membrane as a helical segment; that stretch reads TPIITGYLLGYIAAMPLLGRAS. Topologically, residues 83–86 are cytoplasmic; that stretch reads DRFG. Residues 87-107 form a helical membrane-spanning segment; that stretch reads RKLLIQISLAGFALGSVITAL. Residues 108–111 are Periplasmic-facing; the sequence is ATNL. Residues 112-136 form a helical membrane-spanning segment; the sequence is DVLVAGRVIQGAASGALLPVTLALA. The Cytoplasmic portion of the chain corresponds to 137-145; the sequence is ADLWATHKR. The chain crosses the membrane as a helical span at residues 146-167; that stretch reads AAVLGGVGAAQELGAVLGPIYG. At 168-177 the chain is on the periplasmic side; the sequence is IFVVWLFHHW. A helical transmembrane segment spans residues 178-198; the sequence is QAVFWVNVPLALIAMVLIHIS. Residues 199–212 lie on the Cytoplasmic side of the membrane; sequence LPPRVRTEEPQRVD. A helical membrane pass occupies residues 213 to 230; sequence VTGGLLLALALGLATIGL. Topologically, residues 231 to 243 are periplasmic; the sequence is YNAEPDGKQVLPE. The chain crosses the membrane as a helical span at residues 244–263; sequence YGPPLIIGAVIAAVAFLVWE. Topologically, residues 264–278 are cytoplasmic; sequence RFARTRLLDPAGVRF. The helical transmembrane segment at 279-300 threads the bilayer; it reads RPFLIALLVSLVTGGALMVTLV. The Periplasmic portion of the chain corresponds to 301-320; it reads NVELFGQGVLGLDQDEAVFL. A run of 2 helical transmembrane segments spans residues 321–343 and 344–364; these read LARF…TRVG and DRAV…LIAQ. Over 365–384 the chain is Periplasmic; that stretch reads WPADVLESRHDLGFVSLPTL. Residues 373 to 382 are beta-hairpin; it reads RHDLGFVSLP. Residues 385–407 traverse the membrane as a helical segment; the sequence is DTDLAIAGFGLGLVIAPLTSAAL. The Cytoplasmic portion of the chain corresponds to 408 to 415; it reads RVVPAAQH. The helical transmembrane segment at 416–440 threads the bilayer; that stretch reads GIASAAVVVARMIGMLIGIAALSAW. Over 441–487 the chain is Periplasmic; that stretch reads GLYRFNQYLKEQLAALPPAPADFPGGQMAGQMMRLRTATVQAYVLQY. A helical transmembrane segment spans residues 488-507; that stretch reads GEIFAITAGLCVFGAVLGLF. Over 508–535 the chain is Cytoplasmic; it reads IAGRREHAEESADAVDGVSNARDRAPSA.

Belongs to the major facilitator superfamily. P55 (TC 2.A.1.3.34) family.

The protein resides in the cell inner membrane. Its function is as follows. In association with lipoprotein LprG transports triacylglycerides (TAG) across the inner cell membrane, probably transfering them to lipoprotein LprG in the periplasm. TAG probably regulates lipid metabolism and growth regulation and plays a structural role in the outer membrane. Mutagenesis and molecular modeling suggests TAG (and maybe other lipids) enters the central cavity of the P55 transporter from within the cell inner membrane via clefts on the cytoplasmic face of P55 between TM5-TM8 and TM2-TM11. From there the lipid is probably transferred to the hydrophobic cavity of LprG. The lprG-MHAS_02167/C731_2107 operon complements the vancomycin sensitivity of an M.smegmatis knockout of the same operon. Probably required with LprG for normal surface localization of lipoarabinomannan (LAM). The chain is Triacylglyceride transporter MHAS_02168/C731_2106 from Mycolicibacterium hassiacum (strain DSM 44199 / CIP 105218 / JCM 12690 / 3849) (Mycobacterium hassiacum).